The sequence spans 488 residues: MAEATDVVLVGGGIMSATLGVLLKELEPSWEITLIERLEDVALESSNAWNNAGTGHSALCELNYAPLGANGIIDPARALNIAEQFHVSRQFWATLVAEGKLEDNSFINAVPHMSLVMNEDHCSYLQKRYDAFKTQKLFENMEFSTDRNKISDWAPLMMRGRDENQPVAANYSAEGTDVDFGRLTRQMVKYLQGKGVKTEFNRHVEDIKRESDGAWVLKTADTRNPDGQLTLRTRFLFLGAGGGALTLLQKSGIPEGKGYGGFPVSGLFFRNSNPETAGQHNAKVYGQASVGAPPMSVPHLDTRNVDGKRHLMFGPYAGFRSNFLKQGSLMDLPLSIHMDNLYPMLCAGWANMPLTKYLLGELRKTKEERFASLLEYYPEANPDDWELITAGQRVQIIKKDSEKGGVLQFGTEIVAHADGSLAALLGASPGASTAVPLMIRLMHQCFPERAPSWEDRLKELVPGYGIKLNENPERADEIIAYTAKVLDI.

It belongs to the MQO family. It depends on FAD as a cofactor.

The enzyme catalyses (S)-malate + a quinone = a quinol + oxaloacetate. It participates in carbohydrate metabolism; tricarboxylic acid cycle; oxaloacetate from (S)-malate (quinone route): step 1/1. This is Probable malate:quinone oxidoreductase from Neisseria meningitidis serogroup C (strain 053442).